The chain runs to 193 residues: Ectoine TRAP transporter small permease protein TeaB (193 aa).

A run of 4 helical transmembrane segments spans residues 33–55, 65–82, 103–125, and 145–167; these read ILAL…RFAL, VNRI…GYAA, RALM…YYSV, and IFII…LFTA.

This sequence belongs to the TRAP transporter small permease family. The complex comprises the extracytoplasmic solute receptor protein TeaA, and the two transmembrane proteins TeaB and TeaC.

The protein resides in the cell inner membrane. Part of the tripartite ATP-independent periplasmic (TRAP) transport system TeaABC involved in the uptake of ectoine and hydroxyectoine in response to osmotic upshock. Probably functions as a recovery system for synthesized ectoine that leaks out of the cell. This Halomonas elongata (strain ATCC 33173 / DSM 2581 / NBRC 15536 / NCIMB 2198 / 1H9) protein is Ectoine TRAP transporter small permease protein TeaB (teaB).